The following is a 912-amino-acid chain: Bifunctional uridylyltransferase/uridylyl-removing enzyme (912 aa).

The tract at residues 1 to 369 (MLPRIANQRA…FFASLRSRRK (369 aa)) is uridylyltransferase. The tract at residues 370 to 722 (KVGPFFIEGG…AHWYPARGAT (353 aa)) is uridylyl-removing. Positions 486–608 (VDEHTIRAIG…VQSQERLRLL (123 aa)) constitute an HD domain. ACT domains follow at residues 723 to 802 (LVTV…LVPQ) and 834 to 912 (VIEV…KDAA).

This sequence belongs to the GlnD family. Mg(2+) serves as cofactor.

The catalysed reaction is [protein-PII]-L-tyrosine + UTP = [protein-PII]-uridylyl-L-tyrosine + diphosphate. The enzyme catalyses [protein-PII]-uridylyl-L-tyrosine + H2O = [protein-PII]-L-tyrosine + UMP + H(+). With respect to regulation, uridylyltransferase (UTase) activity is inhibited by glutamine, while glutamine activates uridylyl-removing (UR) activity. Functionally, modifies, by uridylylation and deuridylylation, the PII regulatory proteins (GlnB and homologs), in response to the nitrogen status of the cell that GlnD senses through the glutamine level. Under low glutamine levels, catalyzes the conversion of the PII proteins and UTP to PII-UMP and PPi, while under higher glutamine levels, GlnD hydrolyzes PII-UMP to PII and UMP (deuridylylation). Thus, controls uridylylation state and activity of the PII proteins, and plays an important role in the regulation of nitrogen assimilation and metabolism. This chain is Bifunctional uridylyltransferase/uridylyl-removing enzyme, found in Novosphingobium aromaticivorans (strain ATCC 700278 / DSM 12444 / CCUG 56034 / CIP 105152 / NBRC 16084 / F199).